A 95-amino-acid polypeptide reads, in one-letter code: MSTNTDLSLSSYDEGQGSKFIRKAKETPFVPIGMAGFAAIVAYGLYKLKSRGNTKMSIHLIHMRVAAQGFVVGAMTLGMGYSMYQEFWANPKPKP.

Serine 2 is modified (N-acetylserine). Residues 2 to 93 (STNTDLSLSS…YQEFWANPKP (92 aa)) enclose the HIG1 domain. Phosphoserine is present on serine 8. Transmembrane regions (helical) follow at residues 28 to 48 (PFVP…LYKL) and 69 to 89 (GFVV…EFWA).

Associates with cytochrome c oxidase (COX, complex IV); proposed complex component. Also associates with respiratory chain supercomplexes.

The protein localises to the mitochondrion membrane. It localises to the mitochondrion inner membrane. Functionally, proposed subunit of cytochrome c oxidase (COX, complex IV), which is the terminal component of the mitochondrial respiratory chain that catalyzes the reduction of oxygen to water. May play a role in the assembly of respiratory supercomplexes. The polypeptide is HIG1 domain family member 1A, mitochondrial (Higd1a) (Mus musculus (Mouse)).